Here is a 111-residue protein sequence, read N- to C-terminus: C-type lectin lectoxin-Enh1 (111 aa).

A signal peptide spans 1 to 23 (MGQFTVVSLGLLAMFLSLSGAKG). C26 and C37 are disulfide-bonded. Residues 33–108 (RNGVCNKLFP…CASLHPFICQ (76 aa)) form the C-type lectin domain. Residues 72–74 (EPN) carry the Mannose-binding motif. Residues E80, N95, and D96 each contribute to the Ca(2+) site. C82 and C99 form a disulfide bridge.

Belongs to the true venom lectin family. In terms of tissue distribution, expressed by the venom gland.

The protein resides in the secreted. Functionally, mannose-binding lectin which recognizes specific carbohydrate structures and agglutinates a variety of animal cells by binding to cell-surface glycoproteins and glycolipids. May be a calcium-dependent lectin. This is C-type lectin lectoxin-Enh1 from Pseudoferania polylepis (Macleay's water snake).